The primary structure comprises 99 residues: DASH complex subunit DAD1 (99 aa).

Residues 69–99 (GMNHQTRENTRDENNKISSSDTEDENNNNKI) are disordered. Residues 73 to 83 (QTRENTRDENN) show a composition bias toward basic and acidic residues. Over residues 89-99 (DTEDENNNNKI) the composition is skewed to acidic residues.

It belongs to the DASH complex DAD1 family. In terms of assembly, component of the DASH complex consisting of ASK1, DAD1, DAD2, DAD3, DAD4, DAM1, DUO1, HSK3, SPC19 and SPC34, with a stoichiometry of one copy of each subunit per complex. Multiple DASH complexes oligomerize to form a ring that encircles spindle microtubules and organizes the rod-like NDC80 complexes of the outer kinetochore. DASH complex oligomerization strengthens microtubule attachments. On cytoplasmic microtubules, DASH complexes appear to form patches instead of rings.

The protein localises to the chromosome. It is found in the centromere. Its subcellular location is the kinetochore. The protein resides in the cytoplasm. It localises to the cytoskeleton. The protein localises to the spindle. It is found in the nucleus. In terms of biological role, component of the DASH complex that connects microtubules with kinetochores and couples microtubule depolymerisation to chromosome movement; it is involved in retrieving kinetochores to the spindle poles before their re-orientation on the spindle in early mitosis and allows microtubule depolymerization to pull chromosomes apart and resist detachment during anaphase. Kinetochores, consisting of a centromere-associated inner segment and a microtubule-contacting outer segment, play a crucial role in chromosome segregation by mediating the physical connection between centromeric DNA and microtubules. Kinetochores also serve as an input point for the spindle assembly checkpoint, which delays anaphase until all chromosomes have bioriented on the mitotic spindle. This chain is DASH complex subunit DAD1, found in Candida albicans (strain SC5314 / ATCC MYA-2876) (Yeast).